Consider the following 61-residue polypeptide: Photosystem II reaction center protein K (61 aa).

Residues 1-24 constitute a propeptide that is removed on maturation; the sequence is MLNIFSLICICLNSALYSSNFFFA. A helical membrane pass occupies residues 40-60; sequence MPVIPLFFFLLAFVWQAAVSF.

It belongs to the PsbK family. In terms of assembly, PSII is composed of 1 copy each of membrane proteins PsbA, PsbB, PsbC, PsbD, PsbE, PsbF, PsbH, PsbI, PsbJ, PsbK, PsbL, PsbM, PsbT, PsbX, PsbY, PsbZ, Psb30/Ycf12, at least 3 peripheral proteins of the oxygen-evolving complex and a large number of cofactors. It forms dimeric complexes.

Its subcellular location is the plastid. It localises to the chloroplast thylakoid membrane. One of the components of the core complex of photosystem II (PSII). PSII is a light-driven water:plastoquinone oxidoreductase that uses light energy to abstract electrons from H(2)O, generating O(2) and a proton gradient subsequently used for ATP formation. It consists of a core antenna complex that captures photons, and an electron transfer chain that converts photonic excitation into a charge separation. The chain is Photosystem II reaction center protein K from Vitis vinifera (Grape).